The chain runs to 302 residues: uncharacterized protein (302 aa).

A run of 9 helical transmembrane segments spans residues 3–23 (ILGVGYFLLGLILLYYGSDWF), 39–59 (FVIGATVMAIGTSLPEILTSA), 77–97 (SCICNIGLVLGLSAIISPIIV), 106–126 (LVYLLFVIFAAVIGIDGFSWI), 128–148 (GVVLLILFIIYLRWTVKNGSA), 163–183 (FSLVLLIIGLIGVLVGAELFV), 199–219 (VIGFTLVAFGTSLPELMVSLA), 227–247 (GMVLGNVIGSNIADIGGALAV), and 254–274 (LPAENVQMAVLVIMSLLLYLF).

Belongs to the Ca(2+):cation antiporter (CaCA) (TC 2.A.19) family.

It is found in the cell membrane. This is an uncharacterized protein from Methanocaldococcus jannaschii (strain ATCC 43067 / DSM 2661 / JAL-1 / JCM 10045 / NBRC 100440) (Methanococcus jannaschii).